Reading from the N-terminus, the 472-residue chain is Alanine--anticapsin ligase (472 aa).

Residue Glu-109 participates in Mg(2+) binding. ATP-binding residues include Lys-138 and Lys-178. The 214-residue stretch at 142-355 (RAAFNRAGVK…MAQLLLDVLC (214 aa)) folds into the ATP-grasp domain. A Mg(2+)-binding site is contributed by Leu-182. ATP is bound by residues 184–185 (SS), 226–229 (EEFL), and Gln-268. Substrate-binding positions include Glu-273 and 309 to 311 (HTE). Glu-311 and Glu-324 together coordinate Mg(2+). Position 328 to 331 (328 to 331 (RFAG)) interacts with substrate.

In terms of assembly, monomer or homodimer. It depends on Mg(2+) as a cofactor.

The catalysed reaction is L-anticapsin + L-alanine + ATP = bacilysin + ADP + phosphate + H(+). Its pathway is antibiotic biosynthesis; bacilysin biosynthesis. In terms of biological role, part of the bacABCDEFG operon responsible for the biosynthesis of bacilysin, an irreversible inactivator of the glutaminase domain of glucosamine synthetase. Catalyzes the formation of alpha-dipeptides from various L-amino acids in the presence of ATP. In vivo catalyzes the ligation of L-alanine and L-anticapsin (epoxycyclohexanonyl-Ala) to produce the final bacilysin antibiotic (L-Ala-L-4S-cyclohexenonyl-Ala dipeptide). In Bacillus amyloliquefaciens (Bacillus velezensis), this protein is Alanine--anticapsin ligase.